A 357-amino-acid chain; its full sequence is Histidine biosynthesis bifunctional protein HisB (357 aa).

Residues 1–168 form a histidinol-phosphatase region; the sequence is MTPILFIDRD…GIAHALADAP (168 aa). Asp8 acts as the Nucleophile in catalysis. Mg(2+) contacts are provided by Asp8, Asp10, and Asp128. Asp10 (proton donor) is an active-site residue. An imidazoleglycerol-phosphate dehydratase region spans residues 169 to 357; the sequence is RTAVVQRDTK…TALPSTKGAL (189 aa).

In the N-terminal section; belongs to the histidinol-phosphatase family. This sequence in the C-terminal section; belongs to the imidazoleglycerol-phosphate dehydratase family. Requires Mg(2+) as cofactor.

The protein resides in the cytoplasm. It catalyses the reaction D-erythro-1-(imidazol-4-yl)glycerol 3-phosphate = 3-(imidazol-4-yl)-2-oxopropyl phosphate + H2O. The catalysed reaction is L-histidinol phosphate + H2O = L-histidinol + phosphate. The protein operates within amino-acid biosynthesis; L-histidine biosynthesis; L-histidine from 5-phospho-alpha-D-ribose 1-diphosphate: step 6/9. It functions in the pathway amino-acid biosynthesis; L-histidine biosynthesis; L-histidine from 5-phospho-alpha-D-ribose 1-diphosphate: step 8/9. The polypeptide is Histidine biosynthesis bifunctional protein HisB (Stenotrophomonas maltophilia (strain K279a)).